The sequence spans 186 residues: Ribosome-recycling factor (186 aa).

It belongs to the RRF family.

It is found in the cytoplasm. Functionally, responsible for the release of ribosomes from messenger RNA at the termination of protein biosynthesis. May increase the efficiency of translation by recycling ribosomes from one round of translation to another. In Chlorobaculum parvum (strain DSM 263 / NCIMB 8327) (Chlorobium vibrioforme subsp. thiosulfatophilum), this protein is Ribosome-recycling factor.